The primary structure comprises 311 residues: Aspartate carbamoyltransferase catalytic subunit (311 aa).

Residues arginine 55 and threonine 56 each coordinate carbamoyl phosphate. Residue lysine 85 coordinates L-aspartate. Residues arginine 106, histidine 135, and glutamine 138 each coordinate carbamoyl phosphate. L-aspartate is bound by residues arginine 168 and arginine 230. Leucine 268 and proline 269 together coordinate carbamoyl phosphate.

It belongs to the aspartate/ornithine carbamoyltransferase superfamily. ATCase family. Heterododecamer (2C3:3R2) of six catalytic PyrB chains organized as two trimers (C3), and six regulatory PyrI chains organized as three dimers (R2).

The catalysed reaction is carbamoyl phosphate + L-aspartate = N-carbamoyl-L-aspartate + phosphate + H(+). It functions in the pathway pyrimidine metabolism; UMP biosynthesis via de novo pathway; (S)-dihydroorotate from bicarbonate: step 2/3. In terms of biological role, catalyzes the condensation of carbamoyl phosphate and aspartate to form carbamoyl aspartate and inorganic phosphate, the committed step in the de novo pyrimidine nucleotide biosynthesis pathway. This Proteus mirabilis (strain HI4320) protein is Aspartate carbamoyltransferase catalytic subunit.